We begin with the raw amino-acid sequence, 488 residues long: Tetratricopeptide repeat protein 23 (488 aa).

TPR repeat units lie at residues 45-78 (LHLC…TRIC), 137-170 (LELF…SKEM), 186-219 (SRIK…TEIT), 228-261 (VQVL…TPQP), and 398-431 (AETY…ETFL).

Associated with the EvC complex composed of EFCAB7, IQCE, EVC2 and EVC.

It is found in the cell projection. Its subcellular location is the cilium. Participates positively in the ciliary Hedgehog (Hh) signaling. The sequence is that of Tetratricopeptide repeat protein 23 (Ttc23) from Mus musculus (Mouse).